The sequence spans 174 residues: Small heat shock protein OV25-1 (174 aa).

The region spanning Leu-50–Ser-161 is the sHSP domain. Residues Ser-153–Gln-174 are disordered. The segment covering Ser-161–Gln-174 has biased composition (basic and acidic residues).

Belongs to the small heat shock protein (HSP20) family.

This Onchocerca volvulus protein is Small heat shock protein OV25-1 (OV25-1).